The primary structure comprises 381 residues: MSQFNNSPVLALAKDLISRPSVTPLDEGCQTLMADRLKDAGFNIEDMVFEDTTNMWARKGTQSPVFCFAGHTDVVPVGDLNRWHTPPFEPVVIDDYLHGRGAADMKGSLAAMVVATERFVKKHPDHKGSIAFLITSDEEGPFINGTTRVIDTLEARNEKITWSLVGEPSSTHKLGDIVKNGRRGSLTGNLTVKGMQGHVAYPHLADNPIHKASPALDELARMKWDNGNEFFPPTSFQIANINGGTGASNVIPGTLEVMFNFRYSTEVTAEILIERVLNILDAHGLDYDINWIFNGLPFLTGDGPLLDATRDAIKKVTGLDTDPQTSGGTSDGRFIAPTGAHVLELGPVNATIHKVNECVKVSDLEQLTLCYEAILENLLCQ.

His-71 contributes to the Zn(2+) binding site. Asp-73 is an active-site residue. Asp-104 serves as a coordination point for Zn(2+). Catalysis depends on Glu-138, which acts as the Proton acceptor. Glu-139, Glu-167, and His-353 together coordinate Zn(2+).

The protein belongs to the peptidase M20A family. DapE subfamily. As to quaternary structure, homodimer. It depends on Zn(2+) as a cofactor. The cofactor is Co(2+).

The enzyme catalyses N-succinyl-(2S,6S)-2,6-diaminopimelate + H2O = (2S,6S)-2,6-diaminopimelate + succinate. It participates in amino-acid biosynthesis; L-lysine biosynthesis via DAP pathway; LL-2,6-diaminopimelate from (S)-tetrahydrodipicolinate (succinylase route): step 3/3. Functionally, catalyzes the hydrolysis of N-succinyl-L,L-diaminopimelic acid (SDAP), forming succinate and LL-2,6-diaminopimelate (DAP), an intermediate involved in the bacterial biosynthesis of lysine and meso-diaminopimelic acid, an essential component of bacterial cell walls. In Shewanella piezotolerans (strain WP3 / JCM 13877), this protein is Succinyl-diaminopimelate desuccinylase.